Reading from the N-terminus, the 393-residue chain is Riboflavin biosynthesis protein RibBA (393 aa).

The tract at residues 1-200 is DHBP synthase; sequence MQLDSIDTAL…IEDLEKYRKS (200 aa). D-ribulose 5-phosphate is bound by residues 27-28, Asp32, 139-143, and Glu163; these read RE and RRGHT. Glu28 provides a ligand contact to Mg(2+). His142 provides a ligand contact to Mg(2+). A GTP cyclohydrolase II region spans residues 201 to 393; it reads SISKLDAKAK…TKKEKMGHLI (193 aa). Residue 249–253 participates in GTP binding; it reads RIHSA. The Zn(2+) site is built by Cys254, Cys265, and Cys267. GTP is bound by residues Gln270, 291–293, and Thr313; that span reads EGR. Asp325 functions as the Proton acceptor; for GTP cyclohydrolase activity in the catalytic mechanism. The Nucleophile; for GTP cyclohydrolase activity role is filled by Arg327. Residues Ser348 and Lys353 each coordinate GTP.

It in the N-terminal section; belongs to the DHBP synthase family. This sequence in the C-terminal section; belongs to the GTP cyclohydrolase II family. Mg(2+) serves as cofactor. Mn(2+) is required as a cofactor. Requires Zn(2+) as cofactor.

The catalysed reaction is D-ribulose 5-phosphate = (2S)-2-hydroxy-3-oxobutyl phosphate + formate + H(+). It catalyses the reaction GTP + 4 H2O = 2,5-diamino-6-hydroxy-4-(5-phosphoribosylamino)-pyrimidine + formate + 2 phosphate + 3 H(+). The protein operates within cofactor biosynthesis; riboflavin biosynthesis; 2-hydroxy-3-oxobutyl phosphate from D-ribulose 5-phosphate: step 1/1. It participates in cofactor biosynthesis; riboflavin biosynthesis; 5-amino-6-(D-ribitylamino)uracil from GTP: step 1/4. Catalyzes the conversion of D-ribulose 5-phosphate to formate and 3,4-dihydroxy-2-butanone 4-phosphate. Functionally, catalyzes the conversion of GTP to 2,5-diamino-6-ribosylamino-4(3H)-pyrimidinone 5'-phosphate (DARP), formate and pyrophosphate. This Staphylococcus saprophyticus subsp. saprophyticus (strain ATCC 15305 / DSM 20229 / NCIMB 8711 / NCTC 7292 / S-41) protein is Riboflavin biosynthesis protein RibBA.